A 79-amino-acid chain; its full sequence is D-alanyl carrier protein (79 aa).

The Carrier domain maps to 1 to 77 (MSTKETVIDL…KIIQGIEELQ (77 aa)). Ser35 carries the post-translational modification O-(pantetheine 4'-phosphoryl)serine.

The protein belongs to the DltC family. 4'-phosphopantetheine is transferred from CoA to a specific serine of apo-DCP.

It is found in the cytoplasm. It functions in the pathway cell wall biogenesis; lipoteichoic acid biosynthesis. Its function is as follows. Carrier protein involved in the D-alanylation of lipoteichoic acid (LTA). The loading of thioester-linked D-alanine onto DltC is catalyzed by D-alanine--D-alanyl carrier protein ligase DltA. The DltC-carried D-alanyl group is further transferred to cell membrane phosphatidylglycerol (PG) by forming an ester bond, probably catalyzed by DltD. D-alanylation of LTA plays an important role in modulating the properties of the cell wall in Gram-positive bacteria, influencing the net charge of the cell wall. This Streptococcus equi subsp. equi (strain 4047) protein is D-alanyl carrier protein.